Reading from the N-terminus, the 384-residue chain is Methyl-CpG-binding domain-containing protein 10 (384 aa).

In terms of domain architecture, MBD spans 4-74; that stretch reads TDELVSIELP…SEFEWTTGET (71 aa). Residues 65–384 form a disordered region; sequence SEFEWTTGET…QQGAAASVSC (320 aa). The segment covering 80–91 has biased composition (polar residues); it reads RISQKVKATTPT. Residues 100-224 are a coiled coil; it reads KRRSSLTKKD…MEVDTSELEK (125 aa). Composition is skewed to basic and acidic residues over residues 106–227, 234–250, and 257–269; these read TKKD…KKAG, EPSKVEGLKDTEMKEAQ, and DVEKKPAEEKTEN. The span at 270 to 284 shows a compositional bias: polar residues; the sequence is KGSVTTEANGEQNVT. Residues 295–365 are compositionally biased toward basic and acidic residues; sequence EADKGKESKE…NDMKAEDTNR (71 aa). The stretch at 310-356 forms a coiled coil; it reads TEAEANKENDTQESDEKKTEAAANKENETQESDVKKTEAAVAEEKSN. Ser-323 is subject to Phosphoserine. Residues 369–384 are compositionally biased toward low complexity; that stretch reads ANQVQQQQGAAASVSC.

Expressed in leaves, buds, flowers, stems and siliques.

The protein resides in the nucleus. Probable transcriptional regulator. Required for nucleolar dominance that consist in the silencing of rRNA genes inherited from one progenitor in genetic hybrids. The protein is Methyl-CpG-binding domain-containing protein 10 (MBD10) of Arabidopsis thaliana (Mouse-ear cress).